The chain runs to 179 residues: Ribosome maturation factor RimM (179 aa).

A PRC barrel domain is found at 102–179; the sequence is DGEYYWYQLE…EMKVEWDADF (78 aa).

It belongs to the RimM family. As to quaternary structure, binds ribosomal protein uS19.

Its subcellular location is the cytoplasm. In terms of biological role, an accessory protein needed during the final step in the assembly of 30S ribosomal subunit, possibly for assembly of the head region. Essential for efficient processing of 16S rRNA. May be needed both before and after RbfA during the maturation of 16S rRNA. It has affinity for free ribosomal 30S subunits but not for 70S ribosomes. The protein is Ribosome maturation factor RimM of Pseudomonas syringae pv. tomato (strain ATCC BAA-871 / DC3000).